Consider the following 135-residue polypeptide: Retinol-binding protein 5 (135 aa).

This sequence belongs to the calycin superfamily. Fatty-acid binding protein (FABP) family. Kidney.

Its subcellular location is the cytoplasm. Intracellular transport of retinol. The polypeptide is Retinol-binding protein 5 (RBP5) (Bos taurus (Bovine)).